Here is an 89-residue protein sequence, read N- to C-terminus: Sodium channel toxin To13 (89 aa).

The first 18 residues, 1 to 18 (MKTLFLIITSFILLEVEG), serve as a signal peptide directing secretion. Residues 20–87 (KNGYPRDSKG…TWKNKEPKCK (68 aa)) enclose the LCN-type CS-alpha/beta domain. Cystine bridges form between Cys-30–Cys-86, Cys-34–Cys-60, Cys-45–Cys-67, and Cys-49–Cys-69.

It belongs to the long (4 C-C) scorpion toxin superfamily. Sodium channel inhibitor family. As to expression, expressed by the venom gland.

Its subcellular location is the secreted. Functionally, inhibits voltage-gated sodium channels (Nav). This chain is Sodium channel toxin To13, found in Tityus obscurus (Amazonian scorpion).